Consider the following 234-residue polypeptide: MNGAQGQPAWVLHRRAFRESSTLVELFSQEYGRIGAVANGVRRRGWSGQLEPFIPLQVSWRGRGDLKTLTTVDQAGRGYALRGGALACGFYMAEVLLALTRREDPHPRTWERYAVAVDCLATDDAEPALRRFELALLEESGYGLELEQDVHGEPVVAQARYRYSPERGADRAGTGECGVEVSGATLLALAATEGQGLSEEPVRSEARRLMRAVIQQHLGGRRLRSREMFRSLRD.

It belongs to the RecO family.

Functionally, involved in DNA repair and RecF pathway recombination. In Halorhodospira halophila (strain DSM 244 / SL1) (Ectothiorhodospira halophila (strain DSM 244 / SL1)), this protein is DNA repair protein RecO.